A 688-amino-acid chain; its full sequence is G-protein coupled receptor-associated protein LMBRD2 (688 aa).

Over 1–3 (MSG) the chain is Extracellular. The helical transmembrane segment at 4–21 (AALGLEIVFVFFLALFLL) threads the bilayer. The Cytoplasmic portion of the chain corresponds to 22 to 32 (HRYGDFKKQHR). The chain crosses the membrane as a helical span at residues 33–53 (LVIIATLLAWYLCFLIVFILP). Residues 54 to 99 (LDVSTTIYNRCKLAVNSSPAESNSSFVTLAPSKQQCFKPWSYIPNG) are Extracellular-facing. Residue asparagine 76 is glycosylated (N-linked (GlcNAc...) asparagine). A helical membrane pass occupies residues 100-120 (IMPIFWRVVYWTSQFLTWILL). At 121 to 144 (PFMQSYARSGGFSITGKIKTALIE) the chain is on the cytoplasmic side. Residues 145-165 (NAIYYGTYLLIFGAFLIYVAV) form a helical membrane-spanning segment. The Extracellular segment spans residues 166–180 (NPKFNLQWNQLQTIG). Residues 181 to 201 (IAAANTWGLFLLVLLLGYGLV) form a helical membrane-spanning segment. Over 202–381 (EIPRSHWNGA…ECLLRPWFYR (180 aa)) the chain is Cytoplasmic. A coiled-coil region spans residues 222-254 (FKAAKLMTEKADAEENLEDIMEEVRKVSESIKY). Residues 382-402 (VLAVVLAAFSVIVVWSECTFF) traverse the membrane as a helical segment. Topologically, residues 403–426 (STRPVLSLVAVFIQLAEKTYNYIY) are extracellular. The chain crosses the membrane as a helical span at residues 427–447 (IEMACFLTIFFLSICVYSTVF). Residues 448–467 (RIRVFNYYYLASHHQTDAYS) are Cytoplasmic-facing. A helical transmembrane segment spans residues 468–488 (LLFSGMLFCRLTPPLCLNFLG). Topologically, residues 489–515 (LTHMDATISHTDAQPTAYTSIMGSMKV) are extracellular. Residues 516-536 (LSFIADGFYIYYPMLVVILCI) traverse the membrane as a helical segment. At 537–688 (ATYFSLGTRC…MSRSRIFEDV (152 aa)) the chain is on the cytoplasmic side. Residues 600-617 (REDSTRNRVVHTEQKESS) are compositionally biased toward basic and acidic residues. A disordered region spans residues 600–673 (REDSTRNRVV…ESDSGRYQPG (74 aa)). Residues 618-634 (FSETNTNRPLSKYTRTN) show a composition bias toward polar residues. Basic and acidic residues predominate over residues 635–644 (GRTERDRIEL).

This sequence belongs to the LIMR family.

It localises to the cell membrane. Functionally, may associate with G-protein coupled receptors and regulate downstream signaling pathways. This is G-protein coupled receptor-associated protein LMBRD2 from Gallus gallus (Chicken).